We begin with the raw amino-acid sequence, 226 residues long: Cytidylate kinase (226 aa).

11–19 (GPASAGKST) contributes to the ATP binding site.

This sequence belongs to the cytidylate kinase family. Type 1 subfamily.

It localises to the cytoplasm. It catalyses the reaction CMP + ATP = CDP + ADP. It carries out the reaction dCMP + ATP = dCDP + ADP. This is Cytidylate kinase from Limosilactobacillus fermentum (strain NBRC 3956 / LMG 18251) (Lactobacillus fermentum).